Consider the following 157-residue polypeptide: Thiocyanate hydrolase subunit beta (157 aa).

Heterododecamer consisting of 4 alpha, 4 beta, and 4 gamma subunits.

The catalysed reaction is thiocyanate + H2O + 2 H(+) = carbonyl sulfide + NH4(+). Its pathway is organosulfur degradation; thiocyanate degradation. In terms of biological role, involved in the degradation of thiocyanate. This is Thiocyanate hydrolase subunit beta (scnB) from Thiobacillus thioparus.